The sequence spans 397 residues: Tryptophan synthase beta chain (397 aa).

Lysine 86 is subject to N6-(pyridoxal phosphate)lysine.

This sequence belongs to the TrpB family. Tetramer of two alpha and two beta chains. Pyridoxal 5'-phosphate is required as a cofactor.

The catalysed reaction is (1S,2R)-1-C-(indol-3-yl)glycerol 3-phosphate + L-serine = D-glyceraldehyde 3-phosphate + L-tryptophan + H2O. It functions in the pathway amino-acid biosynthesis; L-tryptophan biosynthesis; L-tryptophan from chorismate: step 5/5. The beta subunit is responsible for the synthesis of L-tryptophan from indole and L-serine. The sequence is that of Tryptophan synthase beta chain from Aeromonas salmonicida (strain A449).